Here is a 439-residue protein sequence, read N- to C-terminus: Xaa-Pro dipeptidase (439 aa).

Residues Asp-244, Asp-255, His-335, Glu-380, and Glu-419 each contribute to the Mn(2+) site.

Belongs to the peptidase M24B family. Bacterial-type prolidase subfamily. Mn(2+) is required as a cofactor.

The enzyme catalyses Xaa-L-Pro dipeptide + H2O = an L-alpha-amino acid + L-proline. Its function is as follows. Splits dipeptides with a prolyl residue in the C-terminal position. This chain is Xaa-Pro dipeptidase, found in Shewanella woodyi (strain ATCC 51908 / MS32).